The sequence spans 379 residues: MTKITGIIAEFNPFHKGHEYLLNQIDGLKIVAMSGNWMQRGEPAIFDKWTRAEMALSCGADLVVELPVMVSVQAADFFASGAVDILKNLGITDLAFGSESAIDYNEIADIYETKETEMESFIKALPDQLSYPEKTQMMWQHFTGIKFDGNTPNHVLALAYAKAAAGKNINLQAIKRVGKFHSTKLTEGFASATALRQQLFSLTDEVGQSLFSLTDLSAIENHVPSVILETYASPKTNWAAYFPLLQYKIRLDDHLENIFQVNQELSVRLKNAIKSAKNFDELVELVYTKRYTKARVRRLLTYILLNIPKEFNLPKEIHILGFSKAGQEILAQNRGKIISKIGQKPWDELTQKADEIYQLGNVDFKEQNFGRKPIIKREK.

ATP contacts are provided by residues 8 to 21 (IAEF…HEYL), G97, N153, and R176.

The protein belongs to the TmcAL family.

It is found in the cytoplasm. The enzyme catalyses cytidine(34) in elongator tRNA(Met) + acetate + ATP = N(4)-acetylcytidine(34) in elongator tRNA(Met) + AMP + diphosphate. Functionally, catalyzes the formation of N(4)-acetylcytidine (ac(4)C) at the wobble position of elongator tRNA(Met), using acetate and ATP as substrates. First activates an acetate ion to form acetyladenylate (Ac-AMP) and then transfers the acetyl group to tRNA to form ac(4)C34. This chain is tRNA(Met) cytidine acetate ligase, found in Lactococcus lactis subsp. cremoris (strain MG1363).